A 510-amino-acid polypeptide reads, in one-letter code: NAD(P)H-quinone oxidoreductase subunit 2, chloroplastic (510 aa).

13 consecutive transmembrane segments (helical) span residues 24-44 (LLLFHGSFIFPECILIFGLIL), 59-79 (WFYFISSTSLVMSITALLFRW), 99-119 (IFQFLILLCSTLCIPLSVEYI), 124-144 (MAITEFLLFVLTATLGGMFLC), 149-169 (XITIFVAPECFSLCSYLLSGY), 183-203 (YLLMGGASSSILVHGFSWLYG), 229-249 (ISIALISITVGIGFKLSPAPF), 295-315 (WHLLLEILAILSMILGNLIAI), 323-343 (MLAYSSIGQIGYVIIGIIVGD), 347-367 (GYASMITYMLFYISMNLGTFA), 395-415 (ALSSALCLLSLGGLPPLAGFF), 418-438 (LHLFWCGWQAGLYFLVSIGLL), and 484-504 (MTVCVIAXTIPGISMNPILAI).

This sequence belongs to the complex I subunit 2 family. NDH is composed of at least 16 different subunits, 5 of which are encoded in the nucleus.

It localises to the plastid. The protein localises to the chloroplast thylakoid membrane. It catalyses the reaction a plastoquinone + NADH + (n+1) H(+)(in) = a plastoquinol + NAD(+) + n H(+)(out). The catalysed reaction is a plastoquinone + NADPH + (n+1) H(+)(in) = a plastoquinol + NADP(+) + n H(+)(out). Its function is as follows. NDH shuttles electrons from NAD(P)H:plastoquinone, via FMN and iron-sulfur (Fe-S) centers, to quinones in the photosynthetic chain and possibly in a chloroplast respiratory chain. The immediate electron acceptor for the enzyme in this species is believed to be plastoquinone. Couples the redox reaction to proton translocation, and thus conserves the redox energy in a proton gradient. The protein is NAD(P)H-quinone oxidoreductase subunit 2, chloroplastic of Narcissus elegans (Daffodil).